The sequence spans 538 residues: Bifunctional purine biosynthesis protein PurH (538 aa).

The MGS-like domain occupies 8-158; it reads IPAPDKVKIR…KNHAYVTVVT (151 aa).

This sequence belongs to the PurH family.

The enzyme catalyses (6R)-10-formyltetrahydrofolate + 5-amino-1-(5-phospho-beta-D-ribosyl)imidazole-4-carboxamide = 5-formamido-1-(5-phospho-D-ribosyl)imidazole-4-carboxamide + (6S)-5,6,7,8-tetrahydrofolate. It catalyses the reaction IMP + H2O = 5-formamido-1-(5-phospho-D-ribosyl)imidazole-4-carboxamide. It participates in purine metabolism; IMP biosynthesis via de novo pathway; 5-formamido-1-(5-phospho-D-ribosyl)imidazole-4-carboxamide from 5-amino-1-(5-phospho-D-ribosyl)imidazole-4-carboxamide (10-formyl THF route): step 1/1. Its pathway is purine metabolism; IMP biosynthesis via de novo pathway; IMP from 5-formamido-1-(5-phospho-D-ribosyl)imidazole-4-carboxamide: step 1/1. The protein is Bifunctional purine biosynthesis protein PurH of Agrobacterium fabrum (strain C58 / ATCC 33970) (Agrobacterium tumefaciens (strain C58)).